A 130-amino-acid polypeptide reads, in one-letter code: Small ribosomal subunit protein uS8 (130 aa).

Belongs to the universal ribosomal protein uS8 family. In terms of assembly, component of the 40S ribosomal subunit. Part of the small subunit (SSU) processome, composed of more than 70 proteins and the RNA chaperone small nucleolar RNA (snoRNA) U3.

The protein resides in the cytoplasm. It is found in the nucleus. The protein localises to the nucleolus. Its function is as follows. Component of the small ribosomal subunit. Part of the small subunit (SSU) processome, first precursor of the small eukaryotic ribosomal subunit. During the assembly of the SSU processome in the nucleolus, many ribosome biogenesis factors, an RNA chaperone and ribosomal proteins associate with the nascent pre-rRNA and work in concert to generate RNA folding, modifications, rearrangements and cleavage as well as targeted degradation of pre-ribosomal RNA by the RNA exosome. Required for erythropoiesis during embryonic development. The sequence is that of Small ribosomal subunit protein uS8 from Danio rerio (Zebrafish).